A 445-amino-acid polypeptide reads, in one-letter code: MKIFGTDGVRGKAGVKLTPMFVMRLGIAAGLYFKKHSQTNKILIGKDTRKSGYMVENALVSALTSIGYNVIQIGPMPTPAIAFLTEDMRCDAGIMISASHNPFEDNGIKFFNSYGYKLKEEEEKAIEEIFHDEGLLHSSYKVGESVGSAKRIDDVIGRYIVHLKHSFPKHLNLQSLRIVLDTANGAAYKVAPVVFSELGADVLVINDEPNGCNINEQCGALHPNQLSQEVKKYRADLGFAFDGDADRLVVVDNLGNIVHGDKLLGVLGVYQKSKNALSSQAIVATNMSNLALKEYLKSQDLELKHCAIGDKFVSECMRLNKANFGGEQSGHIIFSDYAKTGDGLVCALQVSALVLESKQVSSVALNPFELYPQNLVNLNVQKKPPLESLKGYSALLKELDQLEIRHLIRYSGTENKLRILLEAKDEKLLESKMQELKEFFEGHLC.

S99 (phosphoserine intermediate) is an active-site residue. 4 residues coordinate Mg(2+): S99, D242, D244, and D246. S99 carries the post-translational modification Phosphoserine.

This sequence belongs to the phosphohexose mutase family. Mg(2+) is required as a cofactor. Activated by phosphorylation.

The enzyme catalyses alpha-D-glucosamine 1-phosphate = D-glucosamine 6-phosphate. Its function is as follows. Catalyzes the conversion of glucosamine-6-phosphate to glucosamine-1-phosphate. In Helicobacter pylori (strain HPAG1), this protein is Phosphoglucosamine mutase.